The following is a 271-amino-acid chain: Solute carrier family 66 member 2 (271 aa).

The next 3 membrane-spanning stretches (helical) occupy residues 7–27, 49–69, and 72–92; these read GWLLVPLHQLVSWVAAGAMVF, FSTHVCLVLLVANILRILFWF, and HFESPLLWQSIVMILTMLLML. The PQ-loop 1 domain maps to 14–80; it reads HQLVSWVAAG…RHFESPLLWQ (67 aa). At serine 110 the chain carries Phosphoserine. 3 consecutive transmembrane segments (helical) span residues 145–165, 168–188, and 232–252; these read DYVQCVLAFTGVAGYITYLSI, ALFVETLGFLAVLTEAMLGVP, and VCGLLQVMVDLVILGQAYAFA. Positions 178–233 constitute a PQ-loop 2 domain; that stretch reads AVLTEAMLGVPQLYRNYCHRSTEGMSLKMVLMWTSGDTFKTAYFLLNGAPLQFSVC.

The protein localises to the membrane. The polypeptide is Solute carrier family 66 member 2 (Slc66a2) (Mus musculus (Mouse)).